A 115-amino-acid chain; its full sequence is NADH-ubiquinone oxidoreductase chain 3 (115 aa).

The next 3 helical transmembrane spans lie at 3–23, 55–75, and 86–106; these read LILTLLINTLLSSVLVLIAFW, FFLVAITFLLFDLEIALLLPL, and TMLTMALILISLLAASLAYEW.

It belongs to the complex I subunit 3 family. Core subunit of respiratory chain NADH dehydrogenase (Complex I) which is composed of 45 different subunits. Interacts with TMEM186. Interacts with TMEM242.

It localises to the mitochondrion inner membrane. The catalysed reaction is a ubiquinone + NADH + 5 H(+)(in) = a ubiquinol + NAD(+) + 4 H(+)(out). In terms of biological role, core subunit of the mitochondrial membrane respiratory chain NADH dehydrogenase (Complex I) which catalyzes electron transfer from NADH through the respiratory chain, using ubiquinone as an electron acceptor. Essential for the catalytic activity of complex I. This Rhinoceros unicornis (Greater Indian rhinoceros) protein is NADH-ubiquinone oxidoreductase chain 3.